Here is a 556-residue protein sequence, read N- to C-terminus: Carotenoid-cleaving dioxygenase, mitochondrial (556 aa).

Residues His203, His263, His334, and His550 each contribute to the Fe cation site.

The protein belongs to the carotenoid oxygenase family. It depends on Fe(2+) as a cofactor.

Its subcellular location is the mitochondrion. The catalysed reaction is all-trans-beta-carotene + O2 = beta-ionone + all-trans-10'-apo-beta-carotenal. The enzyme catalyses 5-cis-lycopene + O2 = 5-cis-10'-apo-lycopenal + (3E,5E)-6,10-dimethylundeca-3,5,9-trien-2-one. It catalyses the reaction 13-cis-lycopene + O2 = 13-cis-10'-apo-lycopenal + (3E,5E)-6,10-dimethylundeca-3,5,9-trien-2-one. It carries out the reaction lutein + O2 = (3R,6R)-hydroxy-alpha-ionone + (3R)-3-hydroxy-10'-apo-beta-carotenal. The catalysed reaction is lutein + O2 = (3R,6R)-3-hydroxy-10'-apo-alpha-carotenal + (3R)-hydroxy-beta-ionone. The enzyme catalyses all-trans-zeaxanthin + 2 O2 = 4,9-dimethyldodeca-2,4,6,8,10-pentaenedial + 2 (3R)-hydroxy-beta-ionone. It catalyses the reaction all-trans-zeaxanthin + O2 = (3R)-3-hydroxy-10'-apo-beta-carotenal + (3R)-hydroxy-beta-ionone. It carries out the reaction beta-cryptoxanthin + O2 = all-trans-10'-apo-beta-carotenal + (3R)-hydroxy-beta-ionone. The catalysed reaction is all-trans-10'-apo-beta-carotenal + O2 = beta-ionone + 4,9-dimethyldodeca-2,4,6,8,10-pentaenedial. The enzyme catalyses (3R)-3-hydroxy-10'-apo-beta-carotenal + O2 = 4,9-dimethyldodeca-2,4,6,8,10-pentaenedial + (3R)-hydroxy-beta-ionone. It catalyses the reaction (3R,6R)-3-hydroxy-10'-apo-alpha-carotenal + O2 = (3R,6R)-hydroxy-alpha-ionone + 4,9-dimethyldodeca-2,4,6,8,10-pentaenedial. Broad specificity mitochondrial dioxygenase that mediates the asymmetric oxidative cleavage of carotenoids. Cleaves carotenes (pure hydrocarbon carotenoids) such as all-trans-beta-carotene and lycopene as well as xanthophylls (oxygenated carotenoids) such as zeaxanthin, lutein and beta-cryptoxanthin at both the 9,10 and the 9',10' carbon-carbon double bond. Through its function in carotenoids metabolism regulates oxidative stress and the production of important signaling molecules. The chain is Carotenoid-cleaving dioxygenase, mitochondrial from Macaca fascicularis (Crab-eating macaque).